A 534-amino-acid polypeptide reads, in one-letter code: MEIGTFPWLTTIILLPIVAALFIPLLPDRDGKGTTIRWYSLIVGLVDFILLVVAFWTSYDFSNPDLQLVESYAWVPQIGLNWSVGADGLSMPLILLTGFISTLAMLAAWPVTFKTRFFYFLMLAMYGGQILVFAVQDLLVFFFAWELELIPVYLLLAIWGGKRRQYAATKFILYTAGSSLFILVASLAMAFSGDVISFDFQTLAAKEYAIGFQLLLYAGFLIAYGVKLPIVPLHTWLPDAHGEATAPVHMLLAGILLKMGGYALFRMNAGMLPEAHARFAPILVLLGVVNILYAALTSFAQRNLKRKIAYSSISHMGFVLIGLGSFTQLGLSGSMLQMVSHGLIGASLFFLVGATYDRTHTLMLDEMGGVGQKMRKMFAMWTTCAMASLALPGMSGFVAELMVFVGFATSDAYGLPFKVVVISLAAIGVILTPIYLLSMLREIFFGPENKTLTEHETLVDAEPREVYIIACLLVPIIGIGLYPKLTTQVYDATLVQLTERLRSAVPVIAQQAEASRDRLSHFPGQAHRQAPPLG.

A run of 13 helical transmembrane segments spans residues 6–26, 38–58, 93–113, 117–137, 138–158, 171–191, 210–230, 245–265, 279–299, 313–333, 335–355, 377–399, and 419–439; these read FPWLTTIILLPIVAALFIPLL, WYSLIVGLVDFILLVVAFWTS, LILLTGFISTLAMLAAWPVTF, FFYFLMLAMYGGQILVFAVQD, LLVFFFAWELELIPVYLLLAI, FILYTAGSSLFILVASLAMAF, IGFQLLLYAGFLIAYGVKLPI, TAPVHMLLAGILLKMGGYALF, FAPILVLLGVVNILYAALTSF, ISHMGFVLIGLGSFTQLGLSG, MLQMVSHGLIGASLFFLVGAT, MFAMWTTCAMASLALPGMSGFVA, and VVVISLAAIGVILTPIYLLSM.

The protein belongs to the complex I subunit 4 family.

The protein localises to the cellular thylakoid membrane. It catalyses the reaction a plastoquinone + NADH + (n+1) H(+)(in) = a plastoquinol + NAD(+) + n H(+)(out). It carries out the reaction a plastoquinone + NADPH + (n+1) H(+)(in) = a plastoquinol + NADP(+) + n H(+)(out). In terms of biological role, NDH-1 shuttles electrons from NAD(P)H, via FMN and iron-sulfur (Fe-S) centers, to quinones in the respiratory chain. The immediate electron acceptor for the enzyme in this species is believed to be plastoquinone. Couples the redox reaction to proton translocation (for every two electrons transferred, four hydrogen ions are translocated across the cytoplasmic membrane), and thus conserves the redox energy in a proton gradient. The protein is NAD(P)H-quinone oxidoreductase chain 4 2 of Synechococcus elongatus (strain ATCC 33912 / PCC 7942 / FACHB-805) (Anacystis nidulans R2).